Reading from the N-terminus, the 324-residue chain is Heparan sulfate 2-O-sulfotransferase hst-2 (324 aa).

Residues 1 to 6 (MLWKKR) are Cytoplasmic-facing. A helical; Signal-anchor for type II membrane protein transmembrane segment spans residues 7–24 (KVLYFAGISVFILILLLL). The Lumenal segment spans residues 25–324 (KLNSKPKANV…QYHFEKIKPS (300 aa)). N-linked (GlcNAc...) asparagine glycans are attached at residues N75 and N94. Active-site residues include H107 and H109. N-linked (GlcNAc...) asparagine glycosylation is present at N161. 2 disulfide bridges follow: C167–C175 and C188–C194.

Belongs to the sulfotransferase 3 family. Homotrimer. In terms of tissue distribution, present in the hypodermis, muscle, distal tip cells (DTCs) and in neurons (at protein level).

It localises to the golgi apparatus membrane. Its function is as follows. Catalyzes the transfer of sulfate to the C2-position of selected hexuronic acid residues within the maturing heparan sulfate (HS). Involved in cell adhesion and guidance by specifically modifying proteoglycans in the extracellular matrix and on the cell surface that are essential for axon migrations. In Caenorhabditis elegans, this protein is Heparan sulfate 2-O-sulfotransferase hst-2.